An 833-amino-acid polypeptide reads, in one-letter code: Prickle-like protein 1 (833 aa).

A disordered region spans residues 1 to 22 (MPLEMDQKISKHTFGCQRSSTS). Positions 14-122 (FGCQRSSTSD…NIKMLSRAVM (109 aa)) constitute a PET domain. LIM zinc-binding domains are found at residues 124-188 (AMCE…ELLK), 189-249 (PRCS…HYAE), and 250-313 (YCES…EDVH). Disordered stretches follow at residues 312-346 (VHASDSSDSAFQSARSRESRRSVRMGKSSRSADQC), 432-456 (EDNRSNEHWMSDNIKGKNDLQRNSR), 603-702 (CQEK…ERNP), 767-786 (CSSSSSDSEEEGYFLGQPIP), and 805-833 (NALSSSQFSQRTTKSKKKKGHKGKNCIIS). 2 stretches are compositionally biased toward basic and acidic residues: residues 432 to 453 (EDNRSNEHWMSDNIKGKNDLQR) and 603 to 614 (CQEKPPPEEKPM). The segment covering 669–680 (RPHHHRRRKSRK) has biased composition (basic residues). Residues 817 to 833 (TKSKKKKGHKGKNCIIS) show a composition bias toward basic residues. At Cys830 the chain carries Cysteine methyl ester. Cys830 carries S-farnesyl cysteine lipidation. Residues 831–833 (IIS) constitute a propeptide, removed in mature form.

Belongs to the prickle / espinas / testin family. Interacts with dvl2/dsh and mapk8/jnk1.

It localises to the cell membrane. In terms of biological role, acts in a planar cell polarity (PCP) complex; polarization along the apical/basal axis of epithelial cells. Regulates the polarized assembly of fibronectrin on the surface of the mesoderm during gastrulation. Essential for gastrulation cell movements, cooperating with dvl2/dsh to activate jnk. Acts together with tes to control axial elongation. The protein is Prickle-like protein 1 of Xenopus tropicalis (Western clawed frog).